An 89-amino-acid chain; its full sequence is UPF0223 protein BCG9842_B1176 (89 aa).

This sequence belongs to the UPF0223 family.

This is UPF0223 protein BCG9842_B1176 from Bacillus cereus (strain G9842).